The sequence spans 192 residues: Crossover junction endodeoxyribonuclease RuvC (192 aa).

Active-site residues include D9, E70, and D143. Residues D9, E70, and D143 each contribute to the Mg(2+) site. Positions 161–192 (GASVATTGPGSSSLTPAQRAWAEAEAKARRAR) are disordered. The segment covering 163 to 176 (SVATTGPGSSSLTP) has biased composition (polar residues). The span at 182 to 192 (AEAEAKARRAR) shows a compositional bias: basic and acidic residues.

It belongs to the RuvC family. Homodimer which binds Holliday junction (HJ) DNA. The HJ becomes 2-fold symmetrical on binding to RuvC with unstacked arms; it has a different conformation from HJ DNA in complex with RuvA. In the full resolvosome a probable DNA-RuvA(4)-RuvB(12)-RuvC(2) complex forms which resolves the HJ. Requires Mg(2+) as cofactor.

Its subcellular location is the cytoplasm. It carries out the reaction Endonucleolytic cleavage at a junction such as a reciprocal single-stranded crossover between two homologous DNA duplexes (Holliday junction).. Its function is as follows. The RuvA-RuvB-RuvC complex processes Holliday junction (HJ) DNA during genetic recombination and DNA repair. Endonuclease that resolves HJ intermediates. Cleaves cruciform DNA by making single-stranded nicks across the HJ at symmetrical positions within the homologous arms, yielding a 5'-phosphate and a 3'-hydroxyl group; requires a central core of homology in the junction. The consensus cleavage sequence is 5'-(A/T)TT(C/G)-3'. Cleavage occurs on the 3'-side of the TT dinucleotide at the point of strand exchange. HJ branch migration catalyzed by RuvA-RuvB allows RuvC to scan DNA until it finds its consensus sequence, where it cleaves and resolves the cruciform DNA. This chain is Crossover junction endodeoxyribonuclease RuvC, found in Pseudarthrobacter chlorophenolicus (strain ATCC 700700 / DSM 12829 / CIP 107037 / JCM 12360 / KCTC 9906 / NCIMB 13794 / A6) (Arthrobacter chlorophenolicus).